Reading from the N-terminus, the 159-residue chain is Phosphopantetheine adenylyltransferase (159 aa).

Substrate is bound at residue Ser9. Residues Ser9–Phe10 and His17 each bind ATP. Substrate-binding residues include Lys41, Leu74, and Lys88. ATP is bound by residues Gly89–Arg91, Glu99, and Tyr123–Thr129.

Belongs to the bacterial CoaD family. In terms of assembly, homohexamer. Mg(2+) is required as a cofactor.

Its subcellular location is the cytoplasm. The enzyme catalyses (R)-4'-phosphopantetheine + ATP + H(+) = 3'-dephospho-CoA + diphosphate. It participates in cofactor biosynthesis; coenzyme A biosynthesis; CoA from (R)-pantothenate: step 4/5. Reversibly transfers an adenylyl group from ATP to 4'-phosphopantetheine, yielding dephospho-CoA (dPCoA) and pyrophosphate. The polypeptide is Phosphopantetheine adenylyltransferase (Corynebacterium diphtheriae (strain ATCC 700971 / NCTC 13129 / Biotype gravis)).